Reading from the N-terminus, the 160-residue chain is Transcriptional repressor NrdR (160 aa).

The segment at 3–34 is a zinc-finger region; it reads CPFCRHADTQVVDSRVSEDGATIRRRRRCPAC. One can recognise an ATP-cone domain in the interval 49 to 139; that stretch reads PSVVKKDGSR…VYRRFEDVSE (91 aa).

It belongs to the NrdR family. It depends on Zn(2+) as a cofactor.

Its function is as follows. Negatively regulates transcription of bacterial ribonucleotide reductase nrd genes and operons by binding to NrdR-boxes. The sequence is that of Transcriptional repressor NrdR from Paraburkholderia phytofirmans (strain DSM 17436 / LMG 22146 / PsJN) (Burkholderia phytofirmans).